We begin with the raw amino-acid sequence, 379 residues long: UDP-N-acetylglucosamine--N-acetylmuramyl-(pentapeptide) pyrophosphoryl-undecaprenol N-acetylglucosamine transferase (379 aa).

Residues 17–19 (TGG), N128, R169, S197, and Q298 each bind UDP-N-acetyl-alpha-D-glucosamine.

Belongs to the glycosyltransferase 28 family. MurG subfamily.

The protein localises to the cell inner membrane. It catalyses the reaction di-trans,octa-cis-undecaprenyl diphospho-N-acetyl-alpha-D-muramoyl-L-alanyl-D-glutamyl-meso-2,6-diaminopimeloyl-D-alanyl-D-alanine + UDP-N-acetyl-alpha-D-glucosamine = di-trans,octa-cis-undecaprenyl diphospho-[N-acetyl-alpha-D-glucosaminyl-(1-&gt;4)]-N-acetyl-alpha-D-muramoyl-L-alanyl-D-glutamyl-meso-2,6-diaminopimeloyl-D-alanyl-D-alanine + UDP + H(+). It functions in the pathway cell wall biogenesis; peptidoglycan biosynthesis. In terms of biological role, cell wall formation. Catalyzes the transfer of a GlcNAc subunit on undecaprenyl-pyrophosphoryl-MurNAc-pentapeptide (lipid intermediate I) to form undecaprenyl-pyrophosphoryl-MurNAc-(pentapeptide)GlcNAc (lipid intermediate II). The protein is UDP-N-acetylglucosamine--N-acetylmuramyl-(pentapeptide) pyrophosphoryl-undecaprenol N-acetylglucosamine transferase of Brucella suis biovar 1 (strain 1330).